We begin with the raw amino-acid sequence, 429 residues long: 3-phosphoshikimate 1-carboxyvinyltransferase (429 aa).

Lys11, Ser12, and Arg16 together coordinate 3-phosphoshikimate. Position 11 (Lys11) interacts with phosphoenolpyruvate. Phosphoenolpyruvate contacts are provided by Gly82 and Arg110. 3-phosphoshikimate contacts are provided by Ser155, Gln157, Asp302, and Lys329. Gln157 lines the phosphoenolpyruvate pocket. Asp302 (proton acceptor) is an active-site residue. Residues Arg333 and Arg385 each coordinate phosphoenolpyruvate.

Belongs to the EPSP synthase family. As to quaternary structure, monomer.

It is found in the cytoplasm. The enzyme catalyses 3-phosphoshikimate + phosphoenolpyruvate = 5-O-(1-carboxyvinyl)-3-phosphoshikimate + phosphate. The protein operates within metabolic intermediate biosynthesis; chorismate biosynthesis; chorismate from D-erythrose 4-phosphate and phosphoenolpyruvate: step 6/7. Functionally, catalyzes the transfer of the enolpyruvyl moiety of phosphoenolpyruvate (PEP) to the 5-hydroxyl of shikimate-3-phosphate (S3P) to produce enolpyruvyl shikimate-3-phosphate and inorganic phosphate. This is 3-phosphoshikimate 1-carboxyvinyltransferase from Helicobacter pylori (strain J99 / ATCC 700824) (Campylobacter pylori J99).